The primary structure comprises 399 residues: Aspartate aminotransferase (399 aa).

L-aspartate is bound by residues glycine 42 and asparagine 179. The residue at position 240 (lysine 240) is an N6-(pyridoxal phosphate)lysine. An L-aspartate-binding site is contributed by arginine 372.

Belongs to the class-I pyridoxal-phosphate-dependent aminotransferase family. As to quaternary structure, homodimer. The cofactor is pyridoxal 5'-phosphate.

The protein localises to the cytoplasm. It catalyses the reaction L-aspartate + 2-oxoglutarate = oxaloacetate + L-glutamate. The polypeptide is Aspartate aminotransferase (aspC) (Sulfurisphaera tokodaii (strain DSM 16993 / JCM 10545 / NBRC 100140 / 7) (Sulfolobus tokodaii)).